A 215-amino-acid chain; its full sequence is uncharacterized protein (215 aa).

Positions 53, 74, and 97 each coordinate S-adenosyl-L-methionine.

Belongs to the methyltransferase superfamily. YrrT family.

In terms of biological role, could be a S-adenosyl-L-methionine-dependent methyltransferase. This is an uncharacterized protein from Geobacillus kaustophilus (strain HTA426).